The sequence spans 179 residues: ATP synthase subunit b (179 aa).

A helical transmembrane segment spans residues T27–V47.

This sequence belongs to the ATPase B chain family. F-type ATPases have 2 components, F(1) - the catalytic core - and F(0) - the membrane proton channel. F(1) has five subunits: alpha(3), beta(3), gamma(1), delta(1), epsilon(1). F(0) has three main subunits: a(1), b(2) and c(10-14). The alpha and beta chains form an alternating ring which encloses part of the gamma chain. F(1) is attached to F(0) by a central stalk formed by the gamma and epsilon chains, while a peripheral stalk is formed by the delta and b chains.

It localises to the cell inner membrane. F(1)F(0) ATP synthase produces ATP from ADP in the presence of a proton or sodium gradient. F-type ATPases consist of two structural domains, F(1) containing the extramembraneous catalytic core and F(0) containing the membrane proton channel, linked together by a central stalk and a peripheral stalk. During catalysis, ATP synthesis in the catalytic domain of F(1) is coupled via a rotary mechanism of the central stalk subunits to proton translocation. Its function is as follows. Component of the F(0) channel, it forms part of the peripheral stalk, linking F(1) to F(0). The chain is ATP synthase subunit b from Anaeromyxobacter sp. (strain K).